The sequence spans 473 residues: Levansucrase (473 aa).

The first 29 residues, 1–29 (MNIKKFAKQATVLTFTTALLAGGATQAFA), serve as a signal peptide directing secretion. Positions 85, 86, and 164 each coordinate sucrose. Catalysis depends on aspartate 86, which acts as the Nucleophile. Aspartate 241 serves as a coordination point for Ca(2+). Positions 246 and 247 each coordinate sucrose. Glutamine 272, leucine 308, asparagine 310, and aspartate 339 together coordinate Ca(2+). Glutamate 340 is a binding site for sucrose. Glutamate 342 acts as the Proton donor/acceptor in catalysis. Position 360 (arginine 360) interacts with sucrose.

This sequence belongs to the glycosyl hydrolase 68 family. As to quaternary structure, monomer.

Its subcellular location is the secreted. It catalyses the reaction [6)-beta-D-fructofuranosyl-(2-&gt;](n) alpha-D-glucopyranoside + sucrose = [6)-beta-D-fructofuranosyl-(2-&gt;](n+1) alpha-D-glucopyranoside + D-glucose. With respect to regulation, ca(2+) may play an important structural role and promote stability of levansucrase. The enzyme concentration is a factor defining the molecular weight (MW) levan distribution. A bimodal distribution is reported at the usual enzyme concentrations. At low concentrations, the enzyme synthesizes high MW levan, and at high concentrations, it synthesizes low MW levan. Functionally, catalyzes the synthesis of levan, a fructose polymer, by transferring the fructosyl moiety from sucrose to a growing acceptor molecule. Also displays sucrose hydrolase activity. At low sucrose concentrations, functions as an hydrolase with water as acceptor, whereas at higher substrate concentrations it adds fructosyl units to a growing levan chain. The sequence is that of Levansucrase from Bacillus subtilis (strain 168).